The chain runs to 154 residues: Myoglobin (154 aa).

One can recognise a Globin domain in the interval 2–148 (GLSDGEWELV…FRNDIAAKYK (147 aa)). Ser4 carries the phosphoserine modification. A Phosphothreonine modification is found at Thr68. His94 contributes to the heme b binding site.

This sequence belongs to the globin family. Monomeric.

The protein resides in the cytoplasm. It localises to the sarcoplasm. It catalyses the reaction Fe(III)-heme b-[protein] + nitric oxide + H2O = Fe(II)-heme b-[protein] + nitrite + 2 H(+). It carries out the reaction H2O2 + AH2 = A + 2 H2O. Its function is as follows. Monomeric heme protein which primary function is to store oxygen and facilitate its diffusion within muscle tissues. Reversibly binds oxygen through a pentacoordinated heme iron and enables its timely and efficient release as needed during periods of heightened demand. Depending on the oxidative conditions of tissues and cells, and in addition to its ability to bind oxygen, it also has a nitrite reductase activity whereby it regulates the production of bioactive nitric oxide. Under stress conditions, like hypoxia and anoxia, it also protects cells against reactive oxygen species thanks to its pseudoperoxidase activity. The polypeptide is Myoglobin (MB) (Elephas maximus (Indian elephant)).